Consider the following 300-residue polypeptide: uncharacterized protein (300 aa).

3 residues coordinate a divalent metal cation: Glu-146, Glu-148, and Asp-177.

This sequence belongs to the FAH family.

This is an uncharacterized protein from Staphylococcus aureus (strain MW2).